The chain runs to 63 residues: Large ribosomal subunit protein uL29 (63 aa).

Belongs to the universal ribosomal protein uL29 family.

The sequence is that of Large ribosomal subunit protein uL29 from Sodalis glossinidius (strain morsitans).